The following is a 180-amino-acid chain: Endoribonuclease YbeY (180 aa).

3 residues coordinate Zn(2+): histidine 118, histidine 122, and histidine 128.

This sequence belongs to the endoribonuclease YbeY family. Zn(2+) serves as cofactor.

Its subcellular location is the cytoplasm. Its function is as follows. Single strand-specific metallo-endoribonuclease involved in late-stage 70S ribosome quality control and in maturation of the 3' terminus of the 16S rRNA. This Rhodococcus erythropolis (strain PR4 / NBRC 100887) protein is Endoribonuclease YbeY.